We begin with the raw amino-acid sequence, 387 residues long: Oxidase FUB9 (387 aa).

The interval 1–20 is disordered; the sequence is MSRTNLPIQPAKMSDATSSK. Residues 18–379 form the FMN hydroxy acid dehydrogenase domain; that stretch reads SSKPQIFSIQ…TPAHLSILNA (362 aa). Tyr-44 serves as a coordination point for a 2-oxocarboxylate. FMN-binding residues include Ser-126, Gln-150, and Thr-178. An a 2-oxocarboxylate-binding site is contributed by Arg-187. Lys-250 is an FMN binding site. His-274 functions as the Proton acceptor in the catalytic mechanism. An a 2-oxocarboxylate-binding site is contributed by Arg-277. Residues 305-309 and 328-329 contribute to the FMN site; these read DGGFR and GR.

This sequence belongs to the FMN-dependent alpha-hydroxy acid dehydrogenase family. FMN serves as cofactor.

It functions in the pathway mycotoxin biosynthesis. Oxidase; part of the gene cluster that mediates the biosynthesis of fusaric acid, a mycotoxin with low to moderate toxicity to animals and humans, but with high phytotoxic properties. L-aspartate is suggested as fusaric acid amino acid precursor that is activated and further processed to O-acetyl-L-homoserine by cluster enzymes aspartate kinase FUB3 and homoserine O-acetyltransferase FUB5, as well as enzymes of the primary metabolism. The polyketide synthase (PKS) FUB1 generates the triketide trans-2-hexenal which is presumptively released by the hydrolase FUB4 and linked to the NRPS-bound amino acid precursor by NAD(P)-dependent dehydrogenase FUB6. FUB1, FUB4, and the non-canonical NRPS Fub8 may form an enzyme complex. Further processing of the NRPS-bound intermediate might be carried out by FUB6 and the sulfhydrylase FUB7, enabling a spontaneous electrocyclization to close the carbon backbone of fusaric acid. Dihydrofusaric acid is likely to be released via reduction by the thioester reductase (TR) domain of FUB8 whereupon the final oxidation to fusaric acid may (also) be performed by the FMN-dependent dehydrogenase FUB9. The sequence is that of Oxidase FUB9 from Fusarium oxysporum f. sp. lycopersici (strain 4287 / CBS 123668 / FGSC 9935 / NRRL 34936) (Fusarium vascular wilt of tomato).